The sequence spans 192 residues: uncharacterized protein (192 aa).

Positions 1–24 are cleaved as a signal peptide; sequence MSGVLSCVLRACACAGLCCWVCMG. The segment at 140–192 is disordered; it reads RAGADEGAGGNAAGCPEDTRGFARSPGDLMGGMNGDLGDEGETGEGGDNGAGE.

This is an uncharacterized protein from Human herpesvirus 6A (strain Uganda-1102) (HHV-6 variant A).